The following is a 429-amino-acid chain: MIDPTLLRNNLSEIAEKLKVRRGFILDVDKFSQLEEQRKTLQIKTETLQAERNSRSKTIGAAKARGEDISTLLAEVDHMGAELNTVKEELANVLTEIEQLALTIPNIPADEVPLGKDDSDNKEVFRWGTPKKFDFEVKDHVALGEILGGLDFAAGVKLSGARFAVIKGQIARMHRALAQFMLDLHTEQHGYTEAYVPYLVNHTTLYGTGQLPKFGEELFHIKPLENEQTYALIPTAEVPVTNLVRDEIIDEADLPIKMTAHTPCFRSEAGSYGRDTRGLIRMHQFDKVELVQIVEPEKSMEALEELTNQAEKVLQLLNLPYRKVLLCTGDMGFGATKTYDLEVWIPAQNTYREISSCSNMWDFQARRMQARCRAKGDKKTRLVHTLNGSGLAVGRTLVAILENYQNADGSITVPEVLRPYMNGIEIIGK.

235 to 237 is a binding site for L-serine; sequence TAE. 266-268 contacts ATP; sequence RSE. Glutamate 289 lines the L-serine pocket. 353–356 serves as a coordination point for ATP; that stretch reads EISS. Position 389 (serine 389) interacts with L-serine.

It belongs to the class-II aminoacyl-tRNA synthetase family. Type-1 seryl-tRNA synthetase subfamily. As to quaternary structure, homodimer. The tRNA molecule binds across the dimer.

The protein resides in the cytoplasm. The enzyme catalyses tRNA(Ser) + L-serine + ATP = L-seryl-tRNA(Ser) + AMP + diphosphate + H(+). The catalysed reaction is tRNA(Sec) + L-serine + ATP = L-seryl-tRNA(Sec) + AMP + diphosphate + H(+). It functions in the pathway aminoacyl-tRNA biosynthesis; selenocysteinyl-tRNA(Sec) biosynthesis; L-seryl-tRNA(Sec) from L-serine and tRNA(Sec): step 1/1. Its function is as follows. Catalyzes the attachment of serine to tRNA(Ser). Is also able to aminoacylate tRNA(Sec) with serine, to form the misacylated tRNA L-seryl-tRNA(Sec), which will be further converted into selenocysteinyl-tRNA(Sec). The polypeptide is Serine--tRNA ligase (Histophilus somni (strain 2336) (Haemophilus somnus)).